The sequence spans 732 residues: Prolyl 3-hydroxylase 3 (732 aa).

The N-terminal stretch at 1-19 (MLRLLRLLLLLLLPPPGSP) is a signal peptide. The span at 15 to 25 (PPGSPEPPEPP) shows a compositional bias: pro residues. The tract at residues 15-35 (PPGSPEPPEPPGLAQLSPGSP) is disordered. TPR repeat units follow at residues 39-72 (PDLL…RAAL), 152-185 (REPY…NPTH), 214-247 (YWAA…SLAH), and 312-345 (LSQL…YPED). Asn327 and Asn458 each carry an N-linked (GlcNAc...) asparagine glycan. Residues 557–671 (THLVCRSAIE…RCALALWHTW (115 aa)) enclose the Fe2OG dioxygenase domain. Fe cation contacts are provided by His580, Asp582, and His652. Arg662 is an active-site residue. Positions 674-703 (EHSEQEWTEAKELLQEEEEEEEEEDILSRD) form a coiled coil. The span at 676–687 (SEQEWTEAKELL) shows a compositional bias: basic and acidic residues. The tract at residues 676–732 (SEQEWTEAKELLQEEEEEEEEEDILSRDPSPEPPSHKLQRVQEKAGKPRRVRVREEL) is disordered. The span at 688–698 (QEEEEEEEEED) shows a compositional bias: acidic residues. The segment covering 722 to 732 (KPRRVRVREEL) has biased composition (basic residues). The Prevents secretion from ER motif lies at 729-732 (REEL).

This sequence belongs to the leprecan family. As to quaternary structure, identified in a complex with PLOD1 and P3H4. Requires Fe cation as cofactor. L-ascorbate is required as a cofactor. As to expression, detected in kidney (at protein level).

It is found in the endoplasmic reticulum. The enzyme catalyses L-prolyl-[collagen] + 2-oxoglutarate + O2 = trans-3-hydroxy-L-prolyl-[collagen] + succinate + CO2. Functionally, part of a complex composed of PLOD1, P3H3 and P3H4 that catalyzes hydroxylation of lysine residues in collagen alpha chains and is required for normal assembly and cross-linkling of collagen fibrils. Required for normal hydroxylation of lysine residues in type I collagen chains in skin, bone, tendon, aorta and cornea. Required for normal skin stability via its role in hydroxylation of lysine residues in collagen alpha chains and in collagen fibril assembly. Apparently not required for normal prolyl 3-hydroxylation on collagen chains, possibly because it functions redundantly with other prolyl 3-hydroxylases. In Mus musculus (Mouse), this protein is Prolyl 3-hydroxylase 3.